The chain runs to 144 residues: 3-hydroxyacyl-[acyl-carrier-protein] dehydratase FabZ (144 aa).

His-48 is an active-site residue.

The protein belongs to the thioester dehydratase family. FabZ subfamily.

It localises to the cytoplasm. The enzyme catalyses a (3R)-hydroxyacyl-[ACP] = a (2E)-enoyl-[ACP] + H2O. In terms of biological role, involved in unsaturated fatty acids biosynthesis. Catalyzes the dehydration of short chain beta-hydroxyacyl-ACPs and long chain saturated and unsaturated beta-hydroxyacyl-ACPs. This is 3-hydroxyacyl-[acyl-carrier-protein] dehydratase FabZ from Bacillus cytotoxicus (strain DSM 22905 / CIP 110041 / 391-98 / NVH 391-98).